Reading from the N-terminus, the 337-residue chain is Transaldolase (337 aa).

The short motif at 1–10 (MSSSPVKRQR) is the Nuclear localization signal element. Lysine 115 is subject to N6-acetyllysine. Residue lysine 142 is the Schiff-base intermediate with substrate of the active site. Lysine 219 is modified (N6-acetyllysine). Serine 237 and serine 256 each carry phosphoserine. Residues lysine 269, lysine 286, and lysine 321 each carry the N6-acetyllysine modification.

The protein belongs to the transaldolase family. Type 1 subfamily. Homodimer. Heterodimer with isoform 2. Interacts with KPNA1 and KPNA4.

It is found in the nucleus. The protein localises to the cytoplasm. The catalysed reaction is D-sedoheptulose 7-phosphate + D-glyceraldehyde 3-phosphate = D-erythrose 4-phosphate + beta-D-fructose 6-phosphate. It participates in carbohydrate degradation; pentose phosphate pathway; D-glyceraldehyde 3-phosphate and beta-D-fructose 6-phosphate from D-ribose 5-phosphate and D-xylulose 5-phosphate (non-oxidative stage): step 2/3. In terms of biological role, catalyzes the rate-limiting step of the non-oxidative phase in the pentose phosphate pathway. Catalyzes the reversible conversion of sedheptulose-7-phosphate and D-glyceraldehyde 3-phosphate into erythrose-4-phosphate and beta-D-fructose 6-phosphate. Not only acts as a pentose phosphate pathway enzyme, but also affects other metabolite pathways by altering its subcellular localization between the nucleus and the cytoplasm. This is Transaldolase from Homo sapiens (Human).